Consider the following 364-residue polypeptide: tRNA-specific 2-thiouridylase MnmA 2 (364 aa).

Residues 10–17 and Met36 contribute to the ATP site; that span reads GMSGGVDS. Cys106 (nucleophile) is an active-site residue. Residues Cys106 and Cys204 are joined by a disulfide bond. Residue Gly130 participates in ATP binding. The interaction with tRNA stretch occupies residues 154-156; sequence KDQ. The active-site Cysteine persulfide intermediate is the Cys204. Residues 310–311 are interaction with tRNA; sequence RY.

It belongs to the MnmA/TRMU family.

The protein localises to the cytoplasm. The enzyme catalyses S-sulfanyl-L-cysteinyl-[protein] + uridine(34) in tRNA + AH2 + ATP = 2-thiouridine(34) in tRNA + L-cysteinyl-[protein] + A + AMP + diphosphate + H(+). Its function is as follows. Catalyzes the 2-thiolation of uridine at the wobble position (U34) of tRNA, leading to the formation of s(2)U34. This is tRNA-specific 2-thiouridylase MnmA 2 from Thermoanaerobacter pseudethanolicus (strain ATCC 33223 / 39E) (Clostridium thermohydrosulfuricum).